The following is a 121-amino-acid chain: MARIAGINIPPQKHAEIGLTAIYGIGRTTAQKICDSCGIARDKKIKDLTDGDLEKIREEVGRMTIEGDLRRETTINIKRLMDLGCYRGFRHRRGLPMRGQRTRTNARTRKGPRKSAAALKK.

The segment at 93–121 is disordered; that stretch reads RGLPMRGQRTRTNARTRKGPRKSAAALKK.

This sequence belongs to the universal ribosomal protein uS13 family. Part of the 30S ribosomal subunit. Forms a loose heterodimer with protein S19. Forms two bridges to the 50S subunit in the 70S ribosome.

Its function is as follows. Located at the top of the head of the 30S subunit, it contacts several helices of the 16S rRNA. In the 70S ribosome it contacts the 23S rRNA (bridge B1a) and protein L5 of the 50S subunit (bridge B1b), connecting the 2 subunits; these bridges are implicated in subunit movement. Contacts the tRNAs in the A and P-sites. In Methylibium petroleiphilum (strain ATCC BAA-1232 / LMG 22953 / PM1), this protein is Small ribosomal subunit protein uS13.